The following is a 338-amino-acid chain: Ketol-acid reductoisomerase (NADP(+)) (338 aa).

In terms of domain architecture, KARI N-terminal Rossmann spans 1 to 181 (MKVFYDKDAD…GGGRAGIIET (181 aa)). Residues 24–27 (YGSQ), R47, and S52 each bind NADP(+). H107 is a catalytic residue. G133 serves as a coordination point for NADP(+). One can recognise a KARI C-terminal knotted domain in the interval 182 to 327 (NFREETETDL…AKLRAMMPWI (146 aa)). Positions 190, 194, 226, and 230 each coordinate Mg(2+). Residue S251 participates in substrate binding.

It belongs to the ketol-acid reductoisomerase family. Mg(2+) serves as cofactor.

It carries out the reaction (2R)-2,3-dihydroxy-3-methylbutanoate + NADP(+) = (2S)-2-acetolactate + NADPH + H(+). The catalysed reaction is (2R,3R)-2,3-dihydroxy-3-methylpentanoate + NADP(+) = (S)-2-ethyl-2-hydroxy-3-oxobutanoate + NADPH + H(+). It functions in the pathway amino-acid biosynthesis; L-isoleucine biosynthesis; L-isoleucine from 2-oxobutanoate: step 2/4. Its pathway is amino-acid biosynthesis; L-valine biosynthesis; L-valine from pyruvate: step 2/4. Functionally, involved in the biosynthesis of branched-chain amino acids (BCAA). Catalyzes an alkyl-migration followed by a ketol-acid reduction of (S)-2-acetolactate (S2AL) to yield (R)-2,3-dihydroxy-isovalerate. In the isomerase reaction, S2AL is rearranged via a Mg-dependent methyl migration to produce 3-hydroxy-3-methyl-2-ketobutyrate (HMKB). In the reductase reaction, this 2-ketoacid undergoes a metal-dependent reduction by NADPH to yield (R)-2,3-dihydroxy-isovalerate. This chain is Ketol-acid reductoisomerase (NADP(+)), found in Ralstonia pickettii (strain 12J).